Reading from the N-terminus, the 496-residue chain is Alanine aminotransferase 1 (496 aa).

Alanine 2 is subject to N-acetylalanine. Threonine 22 carries the post-translational modification Phosphothreonine. Lysine 314 carries the post-translational modification N6-(pyridoxal phosphate)lysine.

It belongs to the class-I pyridoxal-phosphate-dependent aminotransferase family. Alanine aminotransferase subfamily. In terms of assembly, homodimer. Pyridoxal 5'-phosphate serves as cofactor. Mainly expressed in liver, intestine, colon and white adipose tissue.

The protein resides in the cytoplasm. It catalyses the reaction L-alanine + 2-oxoglutarate = pyruvate + L-glutamate. It functions in the pathway amino-acid degradation; L-alanine degradation via transaminase pathway; pyruvate from L-alanine: step 1/1. Functionally, catalyzes the reversible transamination between alanine and 2-oxoglutarate to form pyruvate and glutamate. Participates in cellular nitrogen metabolism and also in liver gluconeogenesis starting with precursors transported from skeletal muscles. The polypeptide is Alanine aminotransferase 1 (Gpt) (Mus musculus (Mouse)).